Here is a 249-residue protein sequence, read N- to C-terminus: Enolase-phosphatase E1 (249 aa).

Residues aspartate 15 and glutamate 17 each coordinate Mg(2+). Residues 146 to 147 (SS) and lysine 180 each bind substrate. Aspartate 205 is a Mg(2+) binding site.

The protein belongs to the HAD-like hydrolase superfamily. MasA/MtnC family. In terms of assembly, monomer. Mg(2+) serves as cofactor.

The protein localises to the cytoplasm. It localises to the nucleus. The enzyme catalyses 5-methylsulfanyl-2,3-dioxopentyl phosphate + H2O = 1,2-dihydroxy-5-(methylsulfanyl)pent-1-en-3-one + phosphate. Its pathway is amino-acid biosynthesis; L-methionine biosynthesis via salvage pathway; L-methionine from S-methyl-5-thio-alpha-D-ribose 1-phosphate: step 3/6. It participates in amino-acid biosynthesis; L-methionine biosynthesis via salvage pathway; L-methionine from S-methyl-5-thio-alpha-D-ribose 1-phosphate: step 4/6. In terms of biological role, bifunctional enzyme that catalyzes the enolization of 2,3-diketo-5-methylthiopentyl-1-phosphate (DK-MTP-1-P) into the intermediate 2-hydroxy-3-keto-5-methylthiopentenyl-1-phosphate (HK-MTPenyl-1-P), which is then dephosphorylated to form the acireductone 1,2-dihydroxy-3-keto-5-methylthiopentene (DHK-MTPene). This Caenorhabditis briggsae protein is Enolase-phosphatase E1.